Reading from the N-terminus, the 778-residue chain is DISP complex protein LRCH3 (778 aa).

LRR repeat units lie at residues 56–79, 81–104, 105–127, 128–150, 152–172, 173–195, 197–218, 220–239, 240–264, and 266–290; these read AAVT…AANH, LTDT…ACHF, VSLE…VLNL, QALT…LCNL, LKVL…IGHL, RHLT…IGNL, ALRD…LAEV, LIRL…CYRN, LRHL…CIKG, and IHIF…ERRP. A mediates interaction with DOCK7 region spans residues 56–290; it reads AAVTGVLSLS…PDLPDYERRP (235 aa). Phosphoserine occurs at positions 324, 415, and 419. The tract at residues 382 to 642 is mediates direct interaction with MYO6; that stretch reads TTEEEENDVK…PATDPTDAIT (261 aa). Residues 511–536 are disordered; it reads QKASHNPQRQQPPGNGECSFPSRRSQ. Residues 514–523 are compositionally biased toward polar residues; sequence SHNPQRQQPP. A phosphoserine mark is found at serine 608 and serine 625. One can recognise a Calponin-homology (CH) domain in the interval 645–758; the sequence is REEELKLIDQ…VTVQALLELA (114 aa). The tract at residues 758 to 778 is disordered; the sequence is APPKQPPPQQPQQQQPQLSAV. The span at 768–778 shows a compositional bias: low complexity; the sequence is PQQQQPQLSAV.

As to quaternary structure, component of the DOCK7-induced septin displacement/DISP complex, at least composed of DOCK7, LRCH3 and MYO6.

The protein resides in the cytoplasm. Its function is as follows. As part of the DISP complex, may regulate the association of septins with actin and thereby regulate the actin cytoskeleton. The sequence is that of DISP complex protein LRCH3 from Mus musculus (Mouse).